A 279-amino-acid polypeptide reads, in one-letter code: Shikimate dehydrogenase (NADP(+)) (279 aa).

Residues 21-23 and T68 contribute to the shikimate site; that span reads SRS. K72 serves as the catalytic Proton acceptor. D83 contacts NADP(+). Positions 92 and 107 each coordinate shikimate. NADP(+) contacts are provided by residues 132 to 136, 156 to 161, and L221; these read GAGGA and NRTVER. Y223 is a shikimate binding site. G244 provides a ligand contact to NADP(+).

It belongs to the shikimate dehydrogenase family. Homodimer.

It carries out the reaction shikimate + NADP(+) = 3-dehydroshikimate + NADPH + H(+). Its pathway is metabolic intermediate biosynthesis; chorismate biosynthesis; chorismate from D-erythrose 4-phosphate and phosphoenolpyruvate: step 4/7. In terms of biological role, involved in the biosynthesis of the chorismate, which leads to the biosynthesis of aromatic amino acids. Catalyzes the reversible NADPH linked reduction of 3-dehydroshikimate (DHSA) to yield shikimate (SA). The polypeptide is Shikimate dehydrogenase (NADP(+)) (Nitrobacter winogradskyi (strain ATCC 25391 / DSM 10237 / CIP 104748 / NCIMB 11846 / Nb-255)).